We begin with the raw amino-acid sequence, 436 residues long: 3-phosphoshikimate 1-carboxyvinyltransferase (436 aa).

3-phosphoshikimate contacts are provided by lysine 23, serine 24, and arginine 28. A phosphoenolpyruvate-binding site is contributed by lysine 23. 2 residues coordinate phosphoenolpyruvate: glycine 97 and arginine 126. 4 residues coordinate 3-phosphoshikimate: serine 171, glutamine 173, aspartate 323, and lysine 350. Position 173 (glutamine 173) interacts with phosphoenolpyruvate. Residue aspartate 323 is the Proton acceptor of the active site. The phosphoenolpyruvate site is built by arginine 354 and arginine 396.

This sequence belongs to the EPSP synthase family. In terms of assembly, monomer.

The protein localises to the cytoplasm. The enzyme catalyses 3-phosphoshikimate + phosphoenolpyruvate = 5-O-(1-carboxyvinyl)-3-phosphoshikimate + phosphate. It functions in the pathway metabolic intermediate biosynthesis; chorismate biosynthesis; chorismate from D-erythrose 4-phosphate and phosphoenolpyruvate: step 6/7. Its function is as follows. Catalyzes the transfer of the enolpyruvyl moiety of phosphoenolpyruvate (PEP) to the 5-hydroxyl of shikimate-3-phosphate (S3P) to produce enolpyruvyl shikimate-3-phosphate and inorganic phosphate. The protein is 3-phosphoshikimate 1-carboxyvinyltransferase of Prochlorococcus marinus (strain AS9601).